The primary structure comprises 182 residues: Large ribosomal subunit protein uL13 (182 aa).

This sequence belongs to the universal ribosomal protein uL13 family. As to quaternary structure, part of the 50S ribosomal subunit.

Functionally, this protein is one of the early assembly proteins of the 50S ribosomal subunit, although it is not seen to bind rRNA by itself. It is important during the early stages of 50S assembly. The polypeptide is Large ribosomal subunit protein uL13 (Pyrobaculum neutrophilum (strain DSM 2338 / JCM 9278 / NBRC 100436 / V24Sta) (Thermoproteus neutrophilus)).